The primary structure comprises 122 residues: Ferredoxin (122 aa).

The tract at residues 1 to 33 is disordered; that stretch reads MSHDRRLTVGSLLPNQPRPVAVPKAPSVVQPSK. The tract at residues 8 to 14 is targeting peptide; that stretch reads TVGSLLP. A 2Fe-2S ferredoxin-type domain is found at 40-122; the sequence is AIIRLEQNGR…FRLACQANME (83 aa). Cys75, Cys80, Cys83, and Cys117 together coordinate [2Fe-2S] cluster.

This sequence belongs to the 2Fe2S plant-type ferredoxin family. [2Fe-2S] cluster serves as cofactor.

Its subcellular location is the encapsulin nanocompartment. Its function is as follows. Cargo protein of a type 1 encapsulin nanocompartment. An iron-binding protein probably involved in iron mineralization in the encapsulin nanocompartment. 2 different cargo proteins have been identified (IMEF and Fer); when both are expressed in E.coli with the shell protein only IMEF is detected within the nanocompartment. E.coli expressing all 3 genes stores the largest amount of iron and is protected from Fe/H2O2-induced oxidative stress. This is Ferredoxin from Bacillus thermotolerans (Quasibacillus thermotolerans).